A 478-amino-acid polypeptide reads, in one-letter code: UDP-N-acetylmuramate--L-alanine ligase (478 aa).

Gly120–Thr126 lines the ATP pocket.

This sequence belongs to the MurCDEF family.

It is found in the cytoplasm. The enzyme catalyses UDP-N-acetyl-alpha-D-muramate + L-alanine + ATP = UDP-N-acetyl-alpha-D-muramoyl-L-alanine + ADP + phosphate + H(+). It functions in the pathway cell wall biogenesis; peptidoglycan biosynthesis. In terms of biological role, cell wall formation. This Rickettsia bellii (strain OSU 85-389) protein is UDP-N-acetylmuramate--L-alanine ligase.